The following is a 147-amino-acid chain: Hemoglobin subunit delta (147 aa).

The region spanning 3–147 (HLTPDEKNAV…VATALAHKYH (145 aa)) is the Globin domain. A Phosphoserine modification is found at S51. Heme b-binding residues include H64 and H93.

It belongs to the globin family. Heterotetramer of two delta chains and two alpha chains. As to expression, red blood cells.

The chain is Hemoglobin subunit delta (HBD) from Otolemur crassicaudatus (Brown greater galago).